The sequence spans 417 residues: Probable lysophospholipase BODYGUARD 4 (417 aa).

The N-terminal stretch at 1-49 (MSFPRKFGTAIHAALSFIVFFFLDLLDAILCVVYEFVDEILEENSTGCY) is a signal peptide. C50 carries the N-palmitoyl cysteine lipid modification. Residues 150-259 (VIFIHGFMGS…PPYFPSSVEG (110 aa)) enclose the AB hydrolase-1 domain. H154 is a catalytic residue. S225 acts as the Nucleophile in catalysis. Catalysis depends on charge relay system residues D367 and H395.

In terms of tissue distribution, expressed in epidermal cells.

The protein resides in the cell membrane. It is found in the secreted. It localises to the cell wall. Functionally, involved in cuticle development and morphogenesis. This Arabidopsis thaliana (Mouse-ear cress) protein is Probable lysophospholipase BODYGUARD 4.